A 741-amino-acid polypeptide reads, in one-letter code: MQRNRIAKSVLAALAVIAMSAGSISARADGAPRANGFWWPETLDLSPLRQHDVESNPYGKDFDYAQAFQKLDIEAVKKDIRTTLTTSQDWWPADYGNYGPFFIRMAWHGAGTYRTYDGRGGAGGAQQRFEPLNSWPDNANLDKARRLLWPIKKKYGQNISWGDLMVLTGNVALESMGFQTFGFGGGREDDWQSDLVYWGAGPKFMSNNRDKNGKLEKPLAATQMGLIYVNPEGPNGNPDPVAAAQDIREAFGRMAMNDEETLALIAGGHTFGKAHGAASPDKCVGVAPAGAGVEAQGLGWANKCGTGKGVDTITSGLEGAWSVDPVHFTMQYLDNLLGHDWVLTKSPAGAHQWMPKDAQSIVPDAHDPSKLHPLMMFTTDIALKVDPAYSKIAKRFEEHPDEFKLAFAKAWFKLTHRDLGPKARYLGKDVPKVDLIWQDPLPVAGYQTIGAADIADLKSRILASGLPKSELIKTAWASAASFRGTDYRGGANGARIRLAPENGWAVNDPASVAKVLKSLEAIQSGFNKGRTDGKQVSLADLIVLGGSAAVEDAARKAGYDITVPFAPGRVDATQAQTDVASFAVLEPTADGFRNYYQKGNERSPAELLVDRASKLDLTVPEMTVLVGGLRALDANTGHSKLGVLTNHPGTLSNEFFVNLLDMSTEWKKSPSADGTYEGRDRKTGALRWTASPVDLVFGSSSELRAVAEVYASDDAHEKFVRDFVAAWTKVMNLDRFDLKRI.

An N-terminal signal peptide occupies residues 1 to 28 (MQRNRIAKSVLAALAVIAMSAGSISARA). Residues 107-228 (WHGAGTYRTY…LAATQMGLIY (122 aa)) constitute a cross-link (tryptophyl-tyrosyl-methioninium (Trp-Tyr) (with M-254)). His108 (proton acceptor) is an active-site residue. Positions 228-254 (YVNPEGPNGNPDPVAAAQDIREAFGRM) form a cross-link, tryptophyl-tyrosyl-methioninium (Tyr-Met) (with W-107). His269 contributes to the heme b binding site.

The protein belongs to the peroxidase family. Peroxidase/catalase subfamily. In terms of assembly, homodimer or homotetramer. It depends on heme b as a cofactor. Formation of the three residue Trp-Tyr-Met cross-link is important for the catalase, but not the peroxidase activity of the enzyme.

The enzyme catalyses H2O2 + AH2 = A + 2 H2O. It catalyses the reaction 2 H2O2 = O2 + 2 H2O. In terms of biological role, bifunctional enzyme with both catalase and broad-spectrum peroxidase activity. This Burkholderia vietnamiensis (strain G4 / LMG 22486) (Burkholderia cepacia (strain R1808)) protein is Catalase-peroxidase 2.